The chain runs to 526 residues: MQSESGIVADFEVGEEFHEEPKTYYELKSQPLKSSSSAEHSGASKPPLSSSTMTSRILLRQQLMREQMQEQERREQQQKLQAAQFMQQRVAVSQTPAINVSVPTTLPSATQVPMEVLKVQTHLENPTKYHIQQAQRHQVKQYLSTTLANKHAGQVLSPPCPNQPGDHAMPPVPGSSAPNSPMAMLTLNSNCEKEAFYKFEEQSRAESECPGMNTHSRASCMQMDDVIDDIISLESSYNEEILGLMDPALQMANTLPVSGNLIDLYSNQGLPPPGLTISNSCPANLPNIKRELTACIFPTESEARALAKERQKKDNHNLIERRRRFNINDRIKELGTLIPKSNDPDMRWNKGTILKASVDYIRKLQREQQRAKDLENRQKKLEHANRHLLLRVQELEMQARAHGLSLIPSTGLCSPDLVNRIIKQEPVLENCSQELVQHQADLTCTTTLDLTDGTISFTNNLGTMPESSPAYSIPRKMASNLEDILMDDALSPVGVTDPLLSSVSPGASKTSSRRSSMSAEETEHAC.

Positions 20–54 are disordered; the sequence is EPKTYYELKSQPLKSSSSAEHSGASKPPLSSSTMT. Residues 34–44 are compositionally biased toward low complexity; the sequence is SSSSAEHSGAS. Residue Ser180 is modified to Phosphoserine; by MAPK. A Glycyl lysine isopeptide (Lys-Gly) (interchain with G-Cter in SUMO) cross-link involves residue Lys289. Residues 311–364 form the bHLH domain; that stretch reads QKKDNHNLIERRRRFNINDRIKELGTLIPKSNDPDMRWNKGTILKASVDYIRKL. The stretch at 355–401 forms a coiled coil; the sequence is KASVDYIRKLQREQQRAKDLENRQKKLEHANRHLLLRVQELEMQARA. Positions 374–395 are leucine-zipper; the sequence is LENRQKKLEHANRHLLLRVQEL. Ser405 is subject to Phosphoserine; by GSK3. Ser414 is modified (phosphoserine). Residue Lys423 forms a Glycyl lysine isopeptide (Lys-Gly) (interchain with G-Cter in SUMO) linkage. Ser491 is subject to Phosphoserine. The disordered stretch occupies residues 496–526; it reads TDPLLSSVSPGASKTSSRRSSMSAEETEHAC. The segment covering 507 to 519 has biased composition (low complexity); the sequence is ASKTSSRRSSMSA. At Ser516 the chain carries Phosphoserine; by RPS6KA1.

The protein belongs to the MiT/TFE family. As to quaternary structure, homodimer or heterodimer; dimerization is mediated via the coiled coil region. Efficient DNA binding requires dimerization with another bHLH protein. Binds DNA in the form of homodimer or heterodimer with either TFE3, TFEB or TFEC. Identified in a complex with HINT1 and CTNNB1. Interacts with KARS1. Interacts with VSX2. Post-translationally, phosphorylation at Ser-405 significantly enhances the ability to bind the tyrosinase promoter. Phosphorylated at Ser-180 and Ser-516 following KIT signaling, triggering a short live activation: Phosphorylation at Ser-180 and Ser-516 by MAPK and RPS6KA1, respectively, activate the transcription factor activity but also promote ubiquitination and subsequent degradation by the proteasome. Phosphorylated in response to blue light (415nm). In terms of processing, ubiquitinated following phosphorylation at Ser-180, leading to subsequent degradation by the proteasome. Deubiquitinated by USP13, preventing its degradation.

The protein localises to the nucleus. It is found in the cytoplasm. Its function is as follows. Transcription factor that regulates the expression of genes with essential roles in cell differentiation, proliferation and survival. Binds to M-boxes (5'-TCATGTG-3') and symmetrical DNA sequences (E-boxes) (5'-CACGTG-3') found in the promoters of target genes, such as BCL2 and tyrosinase (TYR). Plays an important role in melanocyte development by regulating the expression of tyrosinase (TYR) and tyrosinase-related protein 1 (TYRP1). Plays a critical role in the differentiation of various cell types, such as neural crest-derived melanocytes, mast cells, osteoclasts and optic cup-derived retinal pigment epithelium. The polypeptide is Microphthalmia-associated transcription factor (Mitf) (Rattus norvegicus (Rat)).